Reading from the N-terminus, the 260-residue chain is UPF0246 protein Bxeno_A1262 (260 aa).

The protein belongs to the UPF0246 family.

In Paraburkholderia xenovorans (strain LB400), this protein is UPF0246 protein Bxeno_A1262.